A 347-amino-acid chain; its full sequence is DNA-directed RNA polymerase subunit alpha (347 aa).

Residues Met-1 to Asp-243 form an alpha N-terminal domain (alpha-NTD) region. Residues Val-260 to Ala-347 form an alpha C-terminal domain (alpha-CTD) region.

The protein belongs to the RNA polymerase alpha chain family. In terms of assembly, homodimer. The RNAP catalytic core consists of 2 alpha, 1 beta, 1 beta' and 1 omega subunit. When a sigma factor is associated with the core the holoenzyme is formed, which can initiate transcription.

The enzyme catalyses RNA(n) + a ribonucleoside 5'-triphosphate = RNA(n+1) + diphosphate. Functionally, DNA-dependent RNA polymerase catalyzes the transcription of DNA into RNA using the four ribonucleoside triphosphates as substrates. This is DNA-directed RNA polymerase subunit alpha from Nitratidesulfovibrio vulgaris (strain DSM 19637 / Miyazaki F) (Desulfovibrio vulgaris).